We begin with the raw amino-acid sequence, 498 residues long: ATP synthase subunit beta, chloroplastic (498 aa).

172 to 179 (GGAGVGKT) serves as a coordination point for ATP.

It belongs to the ATPase alpha/beta chains family. As to quaternary structure, F-type ATPases have 2 components, CF(1) - the catalytic core - and CF(0) - the membrane proton channel. CF(1) has five subunits: alpha(3), beta(3), gamma(1), delta(1), epsilon(1). CF(0) has four main subunits: a(1), b(1), b'(1) and c(9-12).

It is found in the plastid. Its subcellular location is the chloroplast thylakoid membrane. It carries out the reaction ATP + H2O + 4 H(+)(in) = ADP + phosphate + 5 H(+)(out). Produces ATP from ADP in the presence of a proton gradient across the membrane. The catalytic sites are hosted primarily by the beta subunits. The protein is ATP synthase subunit beta, chloroplastic of Nicotiana rustica (Aztec tobacco).